The following is a 242-amino-acid chain: Probable transcriptional regulatory protein NGK_1508 (242 aa).

This sequence belongs to the TACO1 family.

It is found in the cytoplasm. The protein is Probable transcriptional regulatory protein NGK_1508 of Neisseria gonorrhoeae (strain NCCP11945).